The following is a 429-amino-acid chain: Methylenetetrahydrofolate--tRNA-(uracil-5-)-methyltransferase TrmFO (429 aa).

7–12 (GAGLAG) contributes to the FAD binding site.

Belongs to the MnmG family. TrmFO subfamily. FAD serves as cofactor.

The protein localises to the cytoplasm. The enzyme catalyses uridine(54) in tRNA + (6R)-5,10-methylene-5,6,7,8-tetrahydrofolate + NADH + H(+) = 5-methyluridine(54) in tRNA + (6S)-5,6,7,8-tetrahydrofolate + NAD(+). The catalysed reaction is uridine(54) in tRNA + (6R)-5,10-methylene-5,6,7,8-tetrahydrofolate + NADPH + H(+) = 5-methyluridine(54) in tRNA + (6S)-5,6,7,8-tetrahydrofolate + NADP(+). Its function is as follows. Catalyzes the folate-dependent formation of 5-methyl-uridine at position 54 (M-5-U54) in all tRNAs. The polypeptide is Methylenetetrahydrofolate--tRNA-(uracil-5-)-methyltransferase TrmFO (Thermosipho melanesiensis (strain DSM 12029 / CIP 104789 / BI429)).